Reading from the N-terminus, the 282-residue chain is 4-diphosphocytidyl-2-C-methyl-D-erythritol kinase (282 aa).

Residue Lys12 is part of the active site. 95–105 (PMGGGIGGGSS) contacts ATP. Asp137 is an active-site residue.

The protein belongs to the GHMP kinase family. IspE subfamily.

It carries out the reaction 4-CDP-2-C-methyl-D-erythritol + ATP = 4-CDP-2-C-methyl-D-erythritol 2-phosphate + ADP + H(+). The protein operates within isoprenoid biosynthesis; isopentenyl diphosphate biosynthesis via DXP pathway; isopentenyl diphosphate from 1-deoxy-D-xylulose 5-phosphate: step 3/6. In terms of biological role, catalyzes the phosphorylation of the position 2 hydroxy group of 4-diphosphocytidyl-2C-methyl-D-erythritol. This Pseudomonas aeruginosa (strain ATCC 15692 / DSM 22644 / CIP 104116 / JCM 14847 / LMG 12228 / 1C / PRS 101 / PAO1) protein is 4-diphosphocytidyl-2-C-methyl-D-erythritol kinase.